The sequence spans 619 residues: UvrABC system protein C (619 aa).

The 79-residue stretch at 20-98 (TAPGVYRMYA…IKSLSPRYNV (79 aa)) folds into the GIY-YIG domain. The region spanning 207–242 (DQLGEEIMHSMQQASEALEFERAARLRDLLSSLRSM) is the UVR domain.

The protein belongs to the UvrC family. As to quaternary structure, interacts with UvrB in an incision complex.

The protein localises to the cytoplasm. In terms of biological role, the UvrABC repair system catalyzes the recognition and processing of DNA lesions. UvrC both incises the 5' and 3' sides of the lesion. The N-terminal half is responsible for the 3' incision and the C-terminal half is responsible for the 5' incision. This Xanthomonas axonopodis pv. citri (strain 306) protein is UvrABC system protein C.